The sequence spans 695 residues: Zinc finger SWIM domain-containing protein 3 (695 aa).

Residues 434–490 (NAPKLRRTRLPSTPPRPKKPFRICGGGDTRLPVEEVEETKADSAQSQLPQPQDQSSK) form a disordered region. Positions 475-489 (DSAQSQLPQPQDQSS) are enriched in low complexity. An SWIM-type zinc finger spans residues 530-571 (VAVQLLENSHQVSKDGCSCSCSFQQCYHLPCRHILALLHTSQ).

The polypeptide is Zinc finger SWIM domain-containing protein 3 (Zswim3) (Mus musculus (Mouse)).